A 428-amino-acid chain; its full sequence is 3-phosphoshikimate 1-carboxyvinyltransferase (428 aa).

3 residues coordinate 3-phosphoshikimate: K21, S22, and R26. K21 lines the phosphoenolpyruvate pocket. Phosphoenolpyruvate contacts are provided by G93 and R121. 3-phosphoshikimate-binding residues include S166, Q168, D314, and K341. A phosphoenolpyruvate-binding site is contributed by Q168. Residue D314 is the Proton acceptor of the active site. Positions 345 and 388 each coordinate phosphoenolpyruvate.

It belongs to the EPSP synthase family. In terms of assembly, monomer.

Its subcellular location is the cytoplasm. The enzyme catalyses 3-phosphoshikimate + phosphoenolpyruvate = 5-O-(1-carboxyvinyl)-3-phosphoshikimate + phosphate. It functions in the pathway metabolic intermediate biosynthesis; chorismate biosynthesis; chorismate from D-erythrose 4-phosphate and phosphoenolpyruvate: step 6/7. Catalyzes the transfer of the enolpyruvyl moiety of phosphoenolpyruvate (PEP) to the 5-hydroxyl of shikimate-3-phosphate (S3P) to produce enolpyruvyl shikimate-3-phosphate and inorganic phosphate. This is 3-phosphoshikimate 1-carboxyvinyltransferase from Syntrophomonas wolfei subsp. wolfei (strain DSM 2245B / Goettingen).